A 149-amino-acid polypeptide reads, in one-letter code: Large ribosomal subunit protein bL20m (149 aa).

A mitochondrion-targeting transit peptide spans 1–9 (MVFLTTRLW).

It belongs to the bacterial ribosomal protein bL20 family. Component of the mitochondrial ribosome large subunit (39S) which comprises a 16S rRNA and about 50 distinct proteins. Interacts with OXA1L.

The protein resides in the mitochondrion. This Mus musculus (Mouse) protein is Large ribosomal subunit protein bL20m (Mrpl20).